We begin with the raw amino-acid sequence, 587 residues long: Probable intramembrane protease YKL100C (587 aa).

At 1–85 (MDKYLNSFVD…HSLVFNYATL (85 aa)) the chain is on the lumenal side. A helical membrane pass occupies residues 86 to 106 (VLIASALVVIGSFTSISSIPF). The Cytoplasmic segment spans residues 107-156 (TALPPTREHSLFDPTDFDVDHDCHVIYRENDEDKKKKKKSKRFFDMMDEK). Residues 157 to 177 (HAIILPLTSGCTLLALYFVIK) traverse the membrane as a helical segment. Residues 178 to 192 (KLHLNWLKYVVKILN) lie on the Lumenal side of the membrane. The chain crosses the membrane as a helical span at residues 193–213 (FNITLLNIPAGTFVYSYFLNS). Over 214-303 (LFRNLSHLAS…KSKRQISNMY (90 aa)) the chain is Cytoplasmic. The helical transmembrane segment at 304–324 (LNSALIVSFVLSIVSTVYFYL) threads the bilayer. At 325–328 (SPND) the chain is on the lumenal side. Residues 329–349 (WLISNAVSMNMAIWSIAQLKL) traverse the membrane as a helical segment. Residues 350–351 (KN) are Cytoplasmic-facing. Residues 352–372 (LKSGALILIALFFYDICFVFG) form a helical membrane-spanning segment. Asp366 is a catalytic residue. Residues 373 to 401 (TDVMVTVATNLDIPVKLSLPVKFNTAQNN) are Lumenal-facing. Residues 402-422 (FNFSILGLGDIALPGMFIAMC) form a helical membrane-spanning segment. Asp411 is a catalytic residue. Residues 423–450 (YKYDIWKWHLDHDDTEFHFLNWSYVGKY) are Cytoplasmic-facing. Residues 451–471 (FITAMVSYVASLVSAMVSLSI) traverse the membrane as a helical segment. Topologically, residues 472 to 475 (FNTA) are lumenal. A helical transmembrane segment spans residues 476–496 (QPALLYIVPSLLISTILVACW). Residues 477–479 (PAL) carry the PAL motif. Topologically, residues 497-587 (NKDFKQFWNF…EEDLLDDESS (91 aa)) are cytoplasmic. The interval 561-587 (EFVQEEDLSDSSEEELSEEDLLDDESS) is disordered.

It belongs to the peptidase A22B family.

It localises to the membrane. It is found in the endoplasmic reticulum membrane. In terms of biological role, may act as intramembrane protease. This Saccharomyces cerevisiae (strain ATCC 204508 / S288c) (Baker's yeast) protein is Probable intramembrane protease YKL100C.